Reading from the N-terminus, the 191-residue chain is MSKLILILTAQILLLTATALAGKNGEDFARTINRKHLGLGKKEKLTHLRVYWHDIVTGRNPSSIRIQGPVAKYSSSSYFGSITMIDNALTLDVPINSTVVGQAQGMYVGAAQKEIGLLMAMNLAFKTGKYNGSTITILGRNTVMSKVREMPVVGGSGMFRFARGYVEARTKLFDMKTGDATVESNCYILHY.

The first 21 residues, 1–21 (MSKLILILTAQILLLTATALA), serve as a signal peptide directing secretion. N-linked (GlcNAc...) asparagine glycans are attached at residues Asn-96 and Asn-131.

Belongs to the plant dirigent protein family. In terms of assembly, homodimer.

The protein resides in the secreted. The protein localises to the extracellular space. It localises to the apoplast. Its function is as follows. Dirigent proteins impart stereoselectivity on the phenoxy radical-coupling reaction, yielding optically active lignans from two molecules of coniferyl alcohol in the biosynthesis of lignans, flavonolignans, and alkaloids and thus plays a central role in plant secondary metabolism. The sequence is that of Dirigent protein 3 (DIR3) from Arabidopsis thaliana (Mouse-ear cress).